Reading from the N-terminus, the 281-residue chain is NADPH-dependent 7-cyano-7-deazaguanine reductase (281 aa).

Substrate is bound at residue 88–90 (IES). Residue 90-91 (SK) coordinates NADPH. The Thioimide intermediate role is filled by Cys189. Residue Asp196 is the Proton donor of the active site. Residue 228–229 (HE) coordinates substrate. Position 257–258 (257–258 (RG)) interacts with NADPH.

This sequence belongs to the GTP cyclohydrolase I family. QueF type 2 subfamily. As to quaternary structure, homodimer.

The protein localises to the cytoplasm. It carries out the reaction 7-aminomethyl-7-carbaguanine + 2 NADP(+) = 7-cyano-7-deazaguanine + 2 NADPH + 3 H(+). Its pathway is tRNA modification; tRNA-queuosine biosynthesis. Catalyzes the NADPH-dependent reduction of 7-cyano-7-deazaguanine (preQ0) to 7-aminomethyl-7-deazaguanine (preQ1). The chain is NADPH-dependent 7-cyano-7-deazaguanine reductase from Yersinia pestis bv. Antiqua (strain Antiqua).